Reading from the N-terminus, the 101-residue chain is Small ribosomal subunit protein uS14 (101 aa).

This sequence belongs to the universal ribosomal protein uS14 family. In terms of assembly, part of the 30S ribosomal subunit. Contacts proteins S3 and S10.

Functionally, binds 16S rRNA, required for the assembly of 30S particles and may also be responsible for determining the conformation of the 16S rRNA at the A site. This chain is Small ribosomal subunit protein uS14, found in Cellvibrio japonicus (strain Ueda107) (Pseudomonas fluorescens subsp. cellulosa).